Reading from the N-terminus, the 596-residue chain is Succinate dehydrogenase flavoprotein subunit (596 aa).

FAD contacts are provided by residues 18–23 (GAGGAG), 41–56 (TKLF…AQGG), and D225. At H49 the chain carries Tele-8alpha-FAD histidine. H246 and T258 together coordinate substrate. R290 (proton acceptor) is an active-site residue. Residue H357 coordinates substrate. E391 serves as a coordination point for FAD. R402 serves as a coordination point for substrate. FAD is bound at residue 407–408 (SL).

This sequence belongs to the FAD-dependent oxidoreductase 2 family. FRD/SDH subfamily. Part of an enzyme complex containing four subunits: a flavoprotein, an iron-sulfur, cytochrome b-556, and a hydrophobic anchor protein. It depends on FAD as a cofactor.

The protein resides in the cell inner membrane. The catalysed reaction is a quinone + succinate = fumarate + a quinol. It participates in carbohydrate metabolism; tricarboxylic acid cycle; fumarate from succinate (bacterial route): step 1/1. This Rickettsia conorii (strain ATCC VR-613 / Malish 7) protein is Succinate dehydrogenase flavoprotein subunit (sdhA).